The primary structure comprises 488 residues: MAESILDRTINRFWYNLGEDCLSESQFDLMIRLMEESLDGDQIIDLTSLPSDNLQVEQVMTTTDDSISEESEFLLAIGEISEDESDSGEEPEFEQVRMDRTGGTEIPKEEDGEGPSRYNERKRKTPEDRYFPTQPKTIPGQKQTSMGMLNIDCQINRRTLIDDWAAEIGLIVKTNREDYLDPETILLLMEHKTSGIAKELIRNTRWNRTTGDIIEQVINAMYTMFLGLNYSDNKVAEKIDEQEKAKIRMTKLQLFDICYLEEFTCDYEKNMYKTEMADFPGYINQYLSKIPIIGEKALTRFRHEANGTSIYSLGFAAKIVKEELSKICDLSKKQKKLKKFNKKCCSIGEASVEYGGKKTSKKKYHKRYKKRYKVYKPYKKKKKFRSGKYFKPKEKKGSKRKYCPKGKKDCRCWICNIEGHYANECPNRQSSEKAHILQQAENLGLQPVEEPYEGVQEVFILEYKEEEEETSTEESDDESSTSEDSDSD.

The span at 80-93 shows a compositional bias: acidic residues; it reads ISEDESDSGEEPEF. Positions 80–143 are disordered; the sequence is ISEDESDSGE…QPKTIPGQKQ (64 aa). Residues 94–109 are compositionally biased toward basic and acidic residues; it reads EQVRMDRTGGTEIPKE. A Nuclear localization signal motif is present at residues 121–124; that stretch reads RKRK. The span at 134–143 shows a compositional bias: polar residues; that stretch reads QPKTIPGQKQ. Residues 410–427 form a CCHC-type zinc finger; it reads CRCWICNIEGHYANECPN. Residues 463-488 form a disordered region; sequence YKEEEEETSTEESDDESSTSEDSDSD. The span at 464–488 shows a compositional bias: acidic residues; that stretch reads KEEEEETSTEESDDESSTSEDSDSD.

The protein belongs to the caulimoviridae capsid protein family. As to quaternary structure, interacts (via nuclear localization signal) with host importin alpha.

It is found in the virion. The protein resides in the host nucleus. In terms of biological role, self assembles to form an icosahedral capsid, about 50 nm in diameter, nm, composed of 420 subunits of the viral capsid protein. The capsid encapsulates the genomic dsDNA. Following virus entry into host cell, provides nuclear import of the viral genome. Virus particles do not enter the nucleus, but dock at the nuclear membrane through the interaction with host importins. In Arabidopsis thaliana (Mouse-ear cress), this protein is Capsid protein.